The sequence spans 182 residues: ATP synthase subunit delta, mitochondrial (182 aa).

The transit peptide at 1–17 (MFRTFGRRLVSCTLPLL) directs the protein to the mitochondrion.

This sequence belongs to the ATPase epsilon chain family. As to quaternary structure, F-type ATPases have 2 components, F(1) - the catalytic core - and F(o) - the membrane proton channel. F(1) has five subunits: alpha(3), beta(3), gamma(1), delta(1), epsilon(1), plus the additional subunit P18 (Tb427.05.1710) that is not present in F(1)F(o) ATP synthase from metazoa. Subunit P18 (Tb927.5.1710) interacts with the alpha subunit with a 1:1 stoichiometry; the interaction is direct. Subunit gamma is part of the central stalk. F(o) has three main subunits: a, b and c. The trypanosomal ATPase complex contains additional subunits that are not present in the F(1)F(o) ATP synthase from metazoa.

Its subcellular location is the mitochondrion. The protein localises to the mitochondrion inner membrane. In terms of biological role, mitochondrial membrane ATP synthase (F(1)F(o) ATP synthase) produces ATP from ADP in the presence of a proton gradient across the membrane which is generated by electron transport complexes of the respiratory chain. F-type ATPases consist of two structural domains, F(1) - containing the extramembraneous catalytic core, and F(o) - containing the membrane proton channel, linked together by a central stalk and a peripheral stalk. During catalysis, ATP synthesis in the catalytic domain of F(1) is coupled via a rotary mechanism of the central stalk subunits to proton translocation. Subunits alpha and beta form the catalytic core in F(1). Rotation of the central stalk against the surrounding alpha(3)beta(3) subunits leads to hydrolysis of ATP in three separate catalytic sites on the beta subunits. Contrary to the procyclic, insect form that requires F(1)F(o) ATP synthase for ATP synthesis, the bloodstream form relies on ATP hydrolysis by F(1)F(o) ATP synthase to maintain its mitochondrial membrane potential. The protein is ATP synthase subunit delta, mitochondrial of Trypanosoma brucei brucei.